Consider the following 209-residue polypeptide: dITP/XTP pyrophosphatase (209 aa).

7–12 (SSHGYK) contributes to the substrate binding site. Asp70 serves as the catalytic Proton acceptor. Asp70 contacts Mg(2+). Substrate is bound by residues Ser71, 154–157 (FGYD), Lys177, and 182–183 (HR).

The protein belongs to the HAM1 NTPase family. Homodimer. Mg(2+) is required as a cofactor.

It carries out the reaction XTP + H2O = XMP + diphosphate + H(+). The enzyme catalyses dITP + H2O = dIMP + diphosphate + H(+). The catalysed reaction is ITP + H2O = IMP + diphosphate + H(+). In terms of biological role, pyrophosphatase that catalyzes the hydrolysis of nucleoside triphosphates to their monophosphate derivatives, with a high preference for the non-canonical purine nucleotides XTP (xanthosine triphosphate), dITP (deoxyinosine triphosphate) and ITP. Seems to function as a house-cleaning enzyme that removes non-canonical purine nucleotides from the nucleotide pool, thus preventing their incorporation into DNA/RNA and avoiding chromosomal lesions. The polypeptide is dITP/XTP pyrophosphatase (Chlamydia trachomatis serovar L2 (strain ATCC VR-902B / DSM 19102 / 434/Bu)).